Here is a 443-residue protein sequence, read N- to C-terminus: Trigger factor (443 aa).

In terms of domain architecture, PPIase FKBP-type spans 168-254 (GDFVTIDFEG…IKNLKEKKLP (87 aa)).

The protein belongs to the FKBP-type PPIase family. Tig subfamily.

The protein localises to the cytoplasm. The enzyme catalyses [protein]-peptidylproline (omega=180) = [protein]-peptidylproline (omega=0). Its function is as follows. Involved in protein export. Acts as a chaperone by maintaining the newly synthesized protein in an open conformation. Functions as a peptidyl-prolyl cis-trans isomerase. This chain is Trigger factor, found in Syntrophus aciditrophicus (strain SB).